Reading from the N-terminus, the 306-residue chain is Homoserine O-acetyltransferase (306 aa).

C142 (acyl-thioester intermediate) is an active-site residue. K163 and S192 together coordinate substrate. The active-site Proton acceptor is H235. Residue E237 is part of the active site. A substrate-binding site is contributed by R249.

This sequence belongs to the MetA family.

It is found in the cytoplasm. It carries out the reaction L-homoserine + acetyl-CoA = O-acetyl-L-homoserine + CoA. The protein operates within amino-acid biosynthesis; L-methionine biosynthesis via de novo pathway; O-acetyl-L-homoserine from L-homoserine: step 1/1. Functionally, transfers an acetyl group from acetyl-CoA to L-homoserine, forming acetyl-L-homoserine. This is Homoserine O-acetyltransferase from Clostridium botulinum (strain Eklund 17B / Type B).